A 98-amino-acid polypeptide reads, in one-letter code: NADH-ubiquinone oxidoreductase chain 4L (98 aa).

The next 3 membrane-spanning stretches (helical) occupy residues 1–21 (MTPT…GMLI), 29–49 (SLLC…LIAL), and 61–81 (IILL…LVSI).

The protein belongs to the complex I subunit 4L family. In terms of assembly, core subunit of respiratory chain NADH dehydrogenase (Complex I) which is composed of 45 different subunits.

The protein resides in the mitochondrion inner membrane. It carries out the reaction a ubiquinone + NADH + 5 H(+)(in) = a ubiquinol + NAD(+) + 4 H(+)(out). In terms of biological role, core subunit of the mitochondrial membrane respiratory chain NADH dehydrogenase (Complex I) which catalyzes electron transfer from NADH through the respiratory chain, using ubiquinone as an electron acceptor. Part of the enzyme membrane arm which is embedded in the lipid bilayer and involved in proton translocation. This chain is NADH-ubiquinone oxidoreductase chain 4L (MT-ND4L), found in Macaca maura (Moor macaque).